We begin with the raw amino-acid sequence, 398 residues long: Ornithine aminotransferase (398 aa).

Residue K255 is modified to N6-(pyridoxal phosphate)lysine.

This sequence belongs to the class-III pyridoxal-phosphate-dependent aminotransferase family. OAT subfamily. It depends on pyridoxal 5'-phosphate as a cofactor.

It localises to the cytoplasm. The enzyme catalyses a 2-oxocarboxylate + L-ornithine = L-glutamate 5-semialdehyde + an L-alpha-amino acid. The protein operates within amino-acid biosynthesis; L-proline biosynthesis; L-glutamate 5-semialdehyde from L-ornithine: step 1/1. Its function is as follows. Catalyzes the interconversion of ornithine to glutamate semialdehyde. The sequence is that of Ornithine aminotransferase from Geobacillus sp. (strain WCH70).